A 293-amino-acid chain; its full sequence is N(1)-aminopropylagmatine ureohydrolase (293 aa).

Positions 105, 128, 130, 132, 210, and 212 each coordinate Mn(2+).

The protein belongs to the arginase family. It depends on Mn(2+) as a cofactor.

The protein localises to the cytoplasm. The enzyme catalyses N(1)-(3-aminopropyl)agmatine + H2O = urea + spermidine. The protein operates within amine and polyamine biosynthesis; spermidine biosynthesis. Functionally, involved in the biosynthesis of polyamines which are thought to support the growth of thermophilic microorganisms under high-temperature conditions. It seems that long-chain and branched-chain of polyamines effectively stabilize DNA and RNA, respectively. Catalyzes the decarboxylation of N1-(3-aminopropyl)agmatine to yield spermidine and urea. It cannot use agmatine as substrate. This is N(1)-aminopropylagmatine ureohydrolase from Thermus thermophilus (strain ATCC 27634 / DSM 579 / HB8).